Consider the following 473-residue polypeptide: Probable aspartokinase (473 aa).

ACT domains are found at residues 323-392 (IFGA…FLNN) and 409-473 (VVGA…KTNS).

Belongs to the aspartokinase family.

It catalyses the reaction L-aspartate + ATP = 4-phospho-L-aspartate + ADP. Its pathway is amino-acid biosynthesis; L-lysine biosynthesis via DAP pathway; (S)-tetrahydrodipicolinate from L-aspartate: step 1/4. It participates in amino-acid biosynthesis; L-methionine biosynthesis via de novo pathway; L-homoserine from L-aspartate: step 1/3. The protein operates within amino-acid biosynthesis; L-threonine biosynthesis; L-threonine from L-aspartate: step 1/5. This Methanocaldococcus jannaschii (strain ATCC 43067 / DSM 2661 / JAL-1 / JCM 10045 / NBRC 100440) (Methanococcus jannaschii) protein is Probable aspartokinase.